The chain runs to 117 residues: Large ribosomal subunit protein bL20c (117 aa).

It belongs to the bacterial ribosomal protein bL20 family.

Its subcellular location is the plastid. It is found in the chloroplast. In terms of biological role, binds directly to 23S ribosomal RNA and is necessary for the in vitro assembly process of the 50S ribosomal subunit. It is not involved in the protein synthesizing functions of that subunit. The chain is Large ribosomal subunit protein bL20c from Carica papaya (Papaya).